Reading from the N-terminus, the 442-residue chain is ATP-dependent protease ATPase subunit HslU (442 aa).

Residues I18, 60–65 (GVGKTE), D255, E320, and R392 each bind ATP.

The protein belongs to the ClpX chaperone family. HslU subfamily. In terms of assembly, a double ring-shaped homohexamer of HslV is capped on each side by a ring-shaped HslU homohexamer. The assembly of the HslU/HslV complex is dependent on binding of ATP.

Its subcellular location is the cytoplasm. Functionally, ATPase subunit of a proteasome-like degradation complex; this subunit has chaperone activity. The binding of ATP and its subsequent hydrolysis by HslU are essential for unfolding of protein substrates subsequently hydrolyzed by HslV. HslU recognizes the N-terminal part of its protein substrates and unfolds these before they are guided to HslV for hydrolysis. This chain is ATP-dependent protease ATPase subunit HslU, found in Aeromonas salmonicida (strain A449).